The chain runs to 709 residues: Fatty acid oxidation complex subunit alpha (709 aa).

Residues 1–188 form an enoyl-CoA hydratase region; sequence MEKTFNLTRR…KMGLVNDVVP (188 aa). A 3-hydroxyacyl-CoA dehydrogenase region spans residues 308–709; the sequence is RKVKKAVILG…AMAAEKARFF (402 aa).

It in the N-terminal section; belongs to the enoyl-CoA hydratase/isomerase family. The protein in the central section; belongs to the 3-hydroxyacyl-CoA dehydrogenase family. Heterotetramer of two alpha chains (FadJ) and two beta chains (FadI).

The protein localises to the cytoplasm. It carries out the reaction a (3S)-3-hydroxyacyl-CoA = a (2E)-enoyl-CoA + H2O. It catalyses the reaction a 4-saturated-(3S)-3-hydroxyacyl-CoA = a (3E)-enoyl-CoA + H2O. The catalysed reaction is a (3S)-3-hydroxyacyl-CoA + NAD(+) = a 3-oxoacyl-CoA + NADH + H(+). The enzyme catalyses (3S)-3-hydroxybutanoyl-CoA = (3R)-3-hydroxybutanoyl-CoA. It participates in lipid metabolism; fatty acid beta-oxidation. Its function is as follows. Catalyzes the formation of a hydroxyacyl-CoA by addition of water on enoyl-CoA. Also exhibits 3-hydroxyacyl-CoA epimerase and 3-hydroxyacyl-CoA dehydrogenase activities. This chain is Fatty acid oxidation complex subunit alpha, found in Shewanella sp. (strain ANA-3).